A 275-amino-acid chain; its full sequence is TATA-box-binding protein (275 aa).

Disordered stretches follow at residues 23–45 (EDES…FGMN) and 73–92 (GSMS…HTPA). 2 consecutive repeat copies span residues 103–179 (LENI…ARIV) and 193–270 (IQNM…YPIL).

The protein belongs to the TBP family. As to quaternary structure, belongs to the TFIID complex together with the TBP-associated factors (TAFs). Binds DNA as monomer.

It localises to the nucleus. General transcription factor that functions at the core of the DNA-binding multiprotein factor TFIID. Binding of TFIID to the TATA box is the initial transcriptional step of the pre-initiation complex (PIC), playing a role in the activation of eukaryotic genes transcribed by RNA polymerase II. The sequence is that of TATA-box-binding protein from Artemia franciscana (Brine shrimp).